A 360-amino-acid polypeptide reads, in one-letter code: Phospho-N-acetylmuramoyl-pentapeptide-transferase (360 aa).

10 helical membrane-spanning segments follow: residues 21–41, 73–93, 94–114, 132–152, 168–188, 199–219, 239–259, 263–283, 288–308, and 338–358; these read YLSF…LWMG, TMGG…WADL, TNPY…VGFV, WKYF…YAHG, VMPQ…VGTS, GLAI…AWAT, LVVV…FNTY, VFMG…IAVL, FVLV…ILQV, and VIVR…ATLK.

The protein belongs to the glycosyltransferase 4 family. MraY subfamily. Mg(2+) is required as a cofactor.

It is found in the cell inner membrane. The catalysed reaction is UDP-N-acetyl-alpha-D-muramoyl-L-alanyl-gamma-D-glutamyl-meso-2,6-diaminopimeloyl-D-alanyl-D-alanine + di-trans,octa-cis-undecaprenyl phosphate = di-trans,octa-cis-undecaprenyl diphospho-N-acetyl-alpha-D-muramoyl-L-alanyl-D-glutamyl-meso-2,6-diaminopimeloyl-D-alanyl-D-alanine + UMP. It functions in the pathway cell wall biogenesis; peptidoglycan biosynthesis. In terms of biological role, catalyzes the initial step of the lipid cycle reactions in the biosynthesis of the cell wall peptidoglycan: transfers peptidoglycan precursor phospho-MurNAc-pentapeptide from UDP-MurNAc-pentapeptide onto the lipid carrier undecaprenyl phosphate, yielding undecaprenyl-pyrophosphoryl-MurNAc-pentapeptide, known as lipid I. The chain is Phospho-N-acetylmuramoyl-pentapeptide-transferase from Vibrio cholerae serotype O1 (strain ATCC 39541 / Classical Ogawa 395 / O395).